We begin with the raw amino-acid sequence, 385 residues long: ATP phosphoribosyltransferase regulatory subunit (385 aa).

The protein belongs to the class-II aminoacyl-tRNA synthetase family. HisZ subfamily. As to quaternary structure, heteromultimer composed of HisG and HisZ subunits.

The protein localises to the cytoplasm. The protein operates within amino-acid biosynthesis; L-histidine biosynthesis; L-histidine from 5-phospho-alpha-D-ribose 1-diphosphate: step 1/9. Functionally, required for the first step of histidine biosynthesis. May allow the feedback regulation of ATP phosphoribosyltransferase activity by histidine. The polypeptide is ATP phosphoribosyltransferase regulatory subunit (Bordetella parapertussis (strain 12822 / ATCC BAA-587 / NCTC 13253)).